A 263-amino-acid chain; its full sequence is uncharacterized protein (263 aa).

This is an uncharacterized protein from Mycobacterium tuberculosis (strain CDC 1551 / Oshkosh).